The primary structure comprises 192 residues: uncharacterized protein (192 aa).

A helical; Signal-anchor membrane pass occupies residues 7–29 (FIHSISGGSSLLSASEVFASAFF). The helical transmembrane segment at 51–67 (YFLCVLVSTFLNSLVII) threads the bilayer.

The protein resides in the membrane. This is an uncharacterized protein from Saccharomyces cerevisiae (strain ATCC 204508 / S288c) (Baker's yeast).